A 325-amino-acid polypeptide reads, in one-letter code: N-acetyl-gamma-glutamyl-phosphate reductase (325 aa).

Residue Cys131 is part of the active site.

It belongs to the NAGSA dehydrogenase family. Type 1 subfamily.

Its subcellular location is the cytoplasm. It catalyses the reaction N-acetyl-L-glutamate 5-semialdehyde + phosphate + NADP(+) = N-acetyl-L-glutamyl 5-phosphate + NADPH + H(+). It participates in amino-acid biosynthesis; L-arginine biosynthesis; N(2)-acetyl-L-ornithine from L-glutamate: step 3/4. Functionally, catalyzes the NADPH-dependent reduction of N-acetyl-5-glutamyl phosphate to yield N-acetyl-L-glutamate 5-semialdehyde. This chain is N-acetyl-gamma-glutamyl-phosphate reductase, found in Methylobacterium sp. (strain 4-46).